The primary structure comprises 157 residues: 2-C-methyl-D-erythritol 2,4-cyclodiphosphate synthase (157 aa).

2 residues coordinate a divalent metal cation: aspartate 8 and histidine 10. Residues 8–10 (DVH) and 34–35 (HS) each bind 4-CDP-2-C-methyl-D-erythritol 2-phosphate. An a divalent metal cation-binding site is contributed by histidine 42. Residues 56 to 58 (DIG), 61 to 65 (FPDTD), 132 to 135 (TTTE), phenylalanine 139, and arginine 142 each bind 4-CDP-2-C-methyl-D-erythritol 2-phosphate.

Belongs to the IspF family. Homotrimer. The cofactor is a divalent metal cation.

It catalyses the reaction 4-CDP-2-C-methyl-D-erythritol 2-phosphate = 2-C-methyl-D-erythritol 2,4-cyclic diphosphate + CMP. It functions in the pathway isoprenoid biosynthesis; isopentenyl diphosphate biosynthesis via DXP pathway; isopentenyl diphosphate from 1-deoxy-D-xylulose 5-phosphate: step 4/6. Its function is as follows. Involved in the biosynthesis of isopentenyl diphosphate (IPP) and dimethylallyl diphosphate (DMAPP), two major building blocks of isoprenoid compounds. Catalyzes the conversion of 4-diphosphocytidyl-2-C-methyl-D-erythritol 2-phosphate (CDP-ME2P) to 2-C-methyl-D-erythritol 2,4-cyclodiphosphate (ME-CPP) with a corresponding release of cytidine 5-monophosphate (CMP). This chain is 2-C-methyl-D-erythritol 2,4-cyclodiphosphate synthase, found in Geotalea uraniireducens (strain Rf4) (Geobacter uraniireducens).